We begin with the raw amino-acid sequence, 2055 residues long: Multiple PDZ domain protein (2055 aa).

One can recognise an L27 domain in the interval 1–63; it reads MLETIDKNRA…SLQQLKDQVN (63 aa). In terms of domain architecture, PDZ 1 spans 138–225; the sequence is IFELLKPPCG…TVQLVIARGS (88 aa). Ser231 bears the Phosphoserine mark. Positions 258-338 constitute a PDZ 2 domain; sequence TIELVNDGSG…RVKLMIARGA (81 aa). Low complexity predominate over residues 348 to 360; it reads LGITLSSSTSSTS. Residues 348-372 are disordered; sequence LGITLSSSTSSTSEMRVDASTQKND. 3 consecutive PDZ domains span residues 378 to 464, 546 to 627, and 693 to 779; these read DVEL…MRKG, VAHV…CRRT, and SIEL…VAKP. Ser783 and Ser1066 each carry phosphoserine. The 82-residue stretch at 996-1077 folds into the PDZ 6 domain; that stretch reads TVTIAKGSSS…IGPDIKITYV (82 aa). The tract at residues 1111 to 1130 is disordered; the sequence is PELPEREEGEGEESELQNAA. Residues 1139-1231 form the PDZ 7 domain; that stretch reads RVELWREPSK…PVVFMVQSII (93 aa). Omega-N-methylarginine is present on Arg1158. Residues 1264 to 1274 show a composition bias toward polar residues; that stretch reads LTTDQAPSQSE. The interval 1264-1299 is disordered; the sequence is LTTDQAPSQSESETEKPALCNVPPSSPSVFSEMGSD. The region spanning 1338 to 1421 is the PDZ 8 domain; sequence VIELEKGQSG…KVKIIFIRNA (84 aa). Low complexity predominate over residues 1435 to 1445; sequence ADSPSSTSDSP. The interval 1435–1459 is disordered; it reads ADSPSSTSDSPQNKEVEPCSTTSAS. In terms of domain architecture, PDZ 9 spans 1471–1552; sequence QLELPKDQGG…TVKLTVRAEN (82 aa). The disordered stretch occupies residues 1557-1597; sequence AVPSSAVTVSGERKDNSQTPAVPAPDLEPIPSTSRSSTPAV. PDZ domains lie at 1614–1697 and 1710–1792; these read TIEI…YRDE and TIEL…GRVK. Positions 1795–1834 are disordered; that stretch reads PFHSERRPSQSSQVSESSLSSFTPPLSGINTSESLESNSK. 2 positions are modified to phosphoserine: Ser1803 and Ser1809. Positions 1803–1815 are enriched in low complexity; sequence SQSSQVSESSLSS. Positions 1816 to 1834 are enriched in polar residues; sequence FTPPLSGINTSESLESNSK. PDZ domains are found at residues 1847 to 1933 and 1972 to 2055; these read TVEI…VAGG and TITL…MVLS.

As to quaternary structure, interacts with CLDN5, DLG4, GRIN1, SYNGAP1, CAMK2A and CAMK2B, HTR2A, HTR2B, HTR2C, PLEKHA1/TAPP1 and PLEKHA2/TAPP2. Interacts with F11R/JAM, CLDN1, NG2, CXADR, CRB1, MPP4 and PALS1. Interacts with FAT4 (via cytoplasmic domain). Interacts with DLL1. In terms of tissue distribution, in the brain, it is strongly expressed in the choroid plexus. Within the hippocampal formation, strongest expression was seen in the soma of CA1-4 pyramidal cells. Expressed in most neocortical regions with the strongest expression in piriform cortex and amygdaloid nuclei but also detected in the subiculum and olfactory bulb. In the cerebellum, the highest level of expression was found in Purkinje cells. Moderately expressed in the granular layer and molecular layer. Expressed in the pontine nuclei, parts of spinal trigeminal nuclei, and the principal sensory trigeminal nuclei of the metencephalon. Expressed in all thalamic and hypothalamic nuclei, and the substantia nigra (at protein level). Ubiquitously expressed.

Its subcellular location is the cell membrane. The protein localises to the apical cell membrane. It is found in the postsynaptic density. It localises to the cell projection. The protein resides in the dendrite. Its subcellular location is the cell junction. The protein localises to the tight junction. It is found in the synapse. It localises to the synaptosome. Its function is as follows. Member of the NMDAR signaling complex that may play a role in control of AMPAR potentiation and synaptic plasticity in excitatory synapses. Promotes clustering of HT2RC at the cell surface. The polypeptide is Multiple PDZ domain protein (Mpdz) (Mus musculus (Mouse)).